A 291-amino-acid chain; its full sequence is Oxidative stress-responsive serine-rich protein 1 (291 aa).

Residues 48 to 174 (EDAKPKSACA…SSDAPQVSQA (127 aa)) form a disordered region. Basic residues predominate over residues 65 to 83 (STRKSSRGAVRTQRRRRSK). A compositionally biased stretch (polar residues) spans 132–142 (ECSSSLDTNHT). T142 and T232 each carry phosphothreonine.

In Bos taurus (Bovine), this protein is Oxidative stress-responsive serine-rich protein 1 (OSER1).